A 387-amino-acid chain; its full sequence is 3-ketoacyl-CoA thiolase (387 aa).

The active-site Acyl-thioester intermediate is the C91. Residues H343 and C373 each act as proton acceptor in the active site.

Belongs to the thiolase-like superfamily. Thiolase family. As to quaternary structure, heterotetramer of two alpha chains (FadB) and two beta chains (FadA).

It is found in the cytoplasm. It carries out the reaction an acyl-CoA + acetyl-CoA = a 3-oxoacyl-CoA + CoA. It functions in the pathway lipid metabolism; fatty acid beta-oxidation. Its function is as follows. Catalyzes the final step of fatty acid oxidation in which acetyl-CoA is released and the CoA ester of a fatty acid two carbons shorter is formed. The sequence is that of 3-ketoacyl-CoA thiolase from Shewanella sp. (strain W3-18-1).